A 286-amino-acid chain; its full sequence is Nucleotide-binding protein VC_2532 (286 aa).

8-15 provides a ligand contact to ATP; sequence GQSGAGKS. 56 to 59 is a binding site for GTP; the sequence is DIRN.

Belongs to the RapZ-like family.

Functionally, displays ATPase and GTPase activities. The polypeptide is Nucleotide-binding protein VC_2532 (Vibrio cholerae serotype O1 (strain ATCC 39315 / El Tor Inaba N16961)).